We begin with the raw amino-acid sequence, 229 residues long: NAD(P)H-hydrate epimerase (229 aa).

A YjeF N-terminal domain is found at 10–217 (AINVDLELFN…ALQRKYELNL (208 aa)). Residue 60–64 (NNGGD) participates in (6S)-NADPHX binding. 2 residues coordinate K(+): asparagine 61 and aspartate 125. Residues 129–135 (GFSFKPP) and aspartate 158 each bind (6S)-NADPHX. Serine 161 provides a ligand contact to K(+).

It belongs to the NnrE/AIBP family. It depends on K(+) as a cofactor.

The catalysed reaction is (6R)-NADHX = (6S)-NADHX. It carries out the reaction (6R)-NADPHX = (6S)-NADPHX. Functionally, catalyzes the epimerization of the S- and R-forms of NAD(P)HX, a damaged form of NAD(P)H that is a result of enzymatic or heat-dependent hydration. This is a prerequisite for the S-specific NAD(P)H-hydrate dehydratase to allow the repair of both epimers of NAD(P)HX. In Drosophila virilis (Fruit fly), this protein is NAD(P)H-hydrate epimerase.